The primary structure comprises 914 residues: DENN domain-containing protein 2C (914 aa).

The segment at Phe-46–Ser-98 is disordered. Positions Ser-56 to Asn-68 are enriched in basic and acidic residues. Ser-261 is subject to Phosphoserine. Residues Gly-411–Arg-446 form a disordered region. A uDENN domain is found at Glu-480 to Thr-627. One can recognise a cDENN domain in the interval Arg-649 to Glu-782. The dDENN domain maps to Arg-784–Val-874.

Functionally, guanine nucleotide exchange factor (GEF) which may activate RAB9A and RAB9B. Promotes the exchange of GDP to GTP, converting inactive GDP-bound Rab proteins into their active GTP-bound form. This is DENN domain-containing protein 2C (Dennd2c) from Mus musculus (Mouse).